A 598-amino-acid polypeptide reads, in one-letter code: Fumarate reductase flavoprotein subunit (598 aa).

FAD contacts are provided by residues 12 to 16 (GAGGA), 36 to 38 (ISK), 44 to 52 (SHTVAAEGG), 156 to 158 (HFV), and aspartate 212. Residue histidine 45 is modified to Tele-8alpha-FAD histidine. Active-site residues include histidine 233 and arginine 249. FAD contacts are provided by residues 356-357 (HY), glutamate 380, and 391-397 (RLGSNSL). Positions 577-598 (AKRVYGGEADAQEKSDKEQANG) are disordered. Residues 587–598 (AQEKSDKEQANG) are compositionally biased toward basic and acidic residues.

Belongs to the FAD-dependent oxidoreductase 2 family. FRD/SDH subfamily. Part of an enzyme complex containing four subunits: a flavoprotein (FrdA), an iron-sulfur protein (FrdB), and two hydrophobic anchor proteins (FrdC and FrdD). Interacts with SdhE. FAD is required as a cofactor.

It is found in the cell inner membrane. The catalysed reaction is a quinone + succinate = fumarate + a quinol. The enzyme catalyses a menaquinone + succinate = a menaquinol + fumarate. Two distinct, membrane-bound, FAD-containing enzymes are responsible for the catalysis of fumarate and succinate interconversion; the fumarate reductase is used in anaerobic growth, and the succinate dehydrogenase is used in aerobic growth. This chain is Fumarate reductase flavoprotein subunit, found in Serratia sp. (strain ATCC 39006) (Prodigiosinella confusarubida).